Here is a 400-residue protein sequence, read N- to C-terminus: Argininosuccinate synthase (400 aa).

ATP is bound by residues 10–18 and Ala38; that span reads AYSGGVDTS. Residue Tyr89 coordinates L-citrulline. Residue Gly119 participates in ATP binding. Positions 121, 125, and 126 each coordinate L-aspartate. Position 125 (Asn125) interacts with L-citrulline. L-citrulline is bound by residues Arg129, Ser177, Glu262, and Tyr274.

It belongs to the argininosuccinate synthase family. Type 1 subfamily. Homotetramer.

The protein resides in the cytoplasm. It carries out the reaction L-citrulline + L-aspartate + ATP = 2-(N(omega)-L-arginino)succinate + AMP + diphosphate + H(+). It participates in amino-acid biosynthesis; L-arginine biosynthesis; L-arginine from L-ornithine and carbamoyl phosphate: step 2/3. The sequence is that of Argininosuccinate synthase from Trichodesmium erythraeum (strain IMS101).